The primary structure comprises 209 residues: Uracil phosphoribosyltransferase (209 aa).

Residues Arg-79, Arg-104, and 131–139 (DPMLATGGS) each bind 5-phospho-alpha-D-ribose 1-diphosphate. Residues Ile-194 and 199–201 (GDA) contribute to the uracil site. Asp-200 provides a ligand contact to 5-phospho-alpha-D-ribose 1-diphosphate.

This sequence belongs to the UPRTase family. It depends on Mg(2+) as a cofactor.

It carries out the reaction UMP + diphosphate = 5-phospho-alpha-D-ribose 1-diphosphate + uracil. It participates in pyrimidine metabolism; UMP biosynthesis via salvage pathway; UMP from uracil: step 1/1. Allosterically activated by GTP. In terms of biological role, catalyzes the conversion of uracil and 5-phospho-alpha-D-ribose 1-diphosphate (PRPP) to UMP and diphosphate. The chain is Uracil phosphoribosyltransferase from Bacillus velezensis (strain DSM 23117 / BGSC 10A6 / LMG 26770 / FZB42) (Bacillus amyloliquefaciens subsp. plantarum).